A 157-amino-acid chain; its full sequence is BPTI/Kunitz domain-containing protein 3 (157 aa).

The signal sequence occupies residues 1–16 (MIRLVTLAALPVLVLC). BPTI/Kunitz inhibitor domains follow at residues 42–95 (CLKY…MKSC) and 97–151 (CKQQ…FFTC). 5 disulfide bridges follow: C42–C95, C70–C91, C97–C151, C107–C134, and C126–C147.

As to expression, nacreous layer of shell (at protein level).

It is found in the secreted. This chain is BPTI/Kunitz domain-containing protein 3, found in Margaritifera margaritifera (Freshwater pearl mussel).